The chain runs to 180 residues: ATP synthase subunit delta (180 aa).

Belongs to the ATPase delta chain family. As to quaternary structure, F-type ATPases have 2 components, F(1) - the catalytic core - and F(0) - the membrane proton channel. F(1) has five subunits: alpha(3), beta(3), gamma(1), delta(1), epsilon(1). F(0) has three main subunits: a(1), b(2) and c(10-14). The alpha and beta chains form an alternating ring which encloses part of the gamma chain. F(1) is attached to F(0) by a central stalk formed by the gamma and epsilon chains, while a peripheral stalk is formed by the delta and b chains.

Its subcellular location is the cell inner membrane. Its function is as follows. F(1)F(0) ATP synthase produces ATP from ADP in the presence of a proton or sodium gradient. F-type ATPases consist of two structural domains, F(1) containing the extramembraneous catalytic core and F(0) containing the membrane proton channel, linked together by a central stalk and a peripheral stalk. During catalysis, ATP synthesis in the catalytic domain of F(1) is coupled via a rotary mechanism of the central stalk subunits to proton translocation. Functionally, this protein is part of the stalk that links CF(0) to CF(1). It either transmits conformational changes from CF(0) to CF(1) or is implicated in proton conduction. The protein is ATP synthase subunit delta of Cupriavidus necator (strain ATCC 17699 / DSM 428 / KCTC 22496 / NCIMB 10442 / H16 / Stanier 337) (Ralstonia eutropha).